Consider the following 414-residue polypeptide: Pre-mRNA-processing protein 45 (414 aa).

Disordered stretches follow at residues 128-159 (ESKR…DTPI) and 264-292 (RSKI…KKIK). The span at 135–146 (LQPSRQKNTSSK) shows a compositional bias: polar residues.

The protein belongs to the SNW family. Associated with the spliceosome.

It localises to the nucleus. Involved in pre-mRNA splicing. This chain is Pre-mRNA-processing protein 45 (PRP45), found in Candida glabrata (strain ATCC 2001 / BCRC 20586 / JCM 3761 / NBRC 0622 / NRRL Y-65 / CBS 138) (Yeast).